A 146-amino-acid chain; its full sequence is Hemoglobin subunit beta (146 aa).

In terms of domain architecture, Globin spans 2–146 (QWTAEEKQLI…VAHALARKYH (145 aa)). 2 residues coordinate heme b: H63 and H92.

This sequence belongs to the globin family. In terms of assembly, heterotetramer of two alpha chains and two beta chains. In terms of tissue distribution, red blood cells.

In terms of biological role, involved in oxygen transport from the lung to the various peripheral tissues. In Apus apus (Common swift), this protein is Hemoglobin subunit beta (HBB).